Here is a 227-residue protein sequence, read N- to C-terminus: PKHD-type hydroxylase Bxeno_B2756 (227 aa).

The Fe2OG dioxygenase domain occupies 80 to 179 (QVYPPLFNRY…RVASFFWVQS (100 aa)). Fe cation-binding residues include H98, D100, and H160. 2-oxoglutarate is bound at residue R170.

The cofactor is Fe(2+). L-ascorbate is required as a cofactor.

This Paraburkholderia xenovorans (strain LB400) protein is PKHD-type hydroxylase Bxeno_B2756.